Here is a 757-residue protein sequence, read N- to C-terminus: 5-methyltetrahydropteroyltriglutamate--homocysteine methyltransferase (757 aa).

5-methyltetrahydropteroyltri-L-glutamate-binding positions include Arg16 to Lys19 and Lys112. L-homocysteine-binding positions include Ile433–Ser435 and Glu486. Residues Ile433–Ser435 and Glu486 contribute to the L-methionine site. 5-methyltetrahydropteroyltri-L-glutamate-binding positions include Arg517–Cys518 and Trp563. Asp601 contributes to the L-homocysteine binding site. An L-methionine-binding site is contributed by Asp601. 5-methyltetrahydropteroyltri-L-glutamate is bound at residue Glu607. His643, Cys645, and Glu667 together coordinate Zn(2+). Catalysis depends on His696, which acts as the Proton donor. Cys728 serves as a coordination point for Zn(2+).

The protein belongs to the vitamin-B12 independent methionine synthase family. Zn(2+) is required as a cofactor.

It carries out the reaction 5-methyltetrahydropteroyltri-L-glutamate + L-homocysteine = tetrahydropteroyltri-L-glutamate + L-methionine. It functions in the pathway amino-acid biosynthesis; L-methionine biosynthesis via de novo pathway; L-methionine from L-homocysteine (MetE route): step 1/1. Its function is as follows. Catalyzes the transfer of a methyl group from 5-methyltetrahydrofolate to homocysteine resulting in methionine formation. This Histophilus somni (strain 2336) (Haemophilus somnus) protein is 5-methyltetrahydropteroyltriglutamate--homocysteine methyltransferase.